Consider the following 285-residue polypeptide: Casein kinase II subunit beta-2 (285 aa).

The segment at 226–285 (FKDAEDEAELDDDDEEEEEEEEEEEELAAMDEAEGAQQQHAAAAAGTATGGVAAGGEGVH) is disordered. Over residues 229-259 (AEDEAELDDDDEEEEEEEEEEEELAAMDEAE) the composition is skewed to acidic residues. Residues 260-272 (GAQQQHAAAAAGT) show a composition bias toward low complexity. The segment covering 273–285 (ATGGVAAGGEGVH) has biased composition (gly residues).

The protein belongs to the casein kinase 2 subunit beta family. Tetramer composed of two alpha chains, one beta chain and one beta' chain. Post-translationally, phosphorylated by alpha subunit.

Functionally, regulatory subunit of casein kinase II/CK2. As part of the kinase complex regulates the basal catalytic activity of the alpha subunit a constitutively active serine/threonine-protein kinase that phosphorylates a large number of substrates containing acidic residues C-terminal to the phosphorylated serine or threonine. The polypeptide is Casein kinase II subunit beta-2 (ckb-2) (Neurospora crassa (strain ATCC 24698 / 74-OR23-1A / CBS 708.71 / DSM 1257 / FGSC 987)).